The following is a 2209-amino-acid chain: Genome polyprotein (2209 aa).

Gly2 carries the N-myristoyl glycine; by host lipid modification. The Cytoplasmic portion of the chain corresponds to Gly2–Gln1520. Residues Gly580–Ala600 are amphipathic alpha-helix. The disordered stretch occupies residues Ala599–Glu619. Active-site for protease 2A activity residues include His901 and Asp919. Residues Cys936 and Cys938 each contribute to the Zn(2+) site. Catalysis depends on Cys990, which acts as the For protease 2A activity. Zn(2+)-binding residues include Cys996 and His998. A membrane-binding region spans residues Gly1128–Gln1200. An oligomerization region spans residues Gly1128 to Thr1266. The RNA-binding stretch occupies residues Ser1149–Ser1153. One can recognise an SF3 helicase domain in the interval Glu1232–Asn1388. Position 1256–1263 (Gly1256–Ser1263) interacts with ATP. Residues Cys1396, Cys1399, Cys1408, and Cys1413 each coordinate Zn(2+). A C4-type zinc finger spans residues Cys1396–Cys1413. The segment at Glu1440–Ile1447 is RNA-binding. The segment at Met1451 to Gln1456 is oligomerization. The stretch at Ala1521 to Tyr1536 is an intramembrane region. Residues Lys1537 to Phe2209 lie on the Cytoplasmic side of the membrane. Tyr1546 is subject to O-(5'-phospho-RNA)-tyrosine. Tyr1546 is subject to O-UMP-tyrosine; transient. Residues Gly1566–Phe1744 enclose the Peptidase C3 domain. Residues His1605, Glu1636, and Cys1712 each act as for protease 3C activity in the active site. One can recognise a RdRp catalytic domain in the interval Glu1975–Leu2090. 2 residues coordinate Mg(2+): Asp1981 and Asp2076.

Belongs to the picornaviruses polyprotein family. In terms of assembly, interacts with capsid protein VP1 and capsid protein VP3 to form heterotrimeric protomers. Interacts with capsid protein VP0, and capsid protein VP3 to form heterotrimeric protomers. Five protomers subsequently associate to form pentamers which serve as building blocks for the capsid. Interacts with capsid protein VP2, capsid protein VP3 and capsid protein VP4 following cleavage of capsid protein VP0. Interacts with human PVR. As to quaternary structure, interacts with capsid protein VP1 and capsid protein VP3 in the mature capsid. In terms of assembly, interacts with capsid protein VP0 and capsid protein VP1 to form heterotrimeric protomers. Five protomers subsequently associate to form pentamers which serve as building blocks for the capsid. Interacts with capsid protein VP4 in the mature capsid. Interacts with protein 2C; this interaction may be important for virion morphogenesis. Interacts with capsid protein VP1 and capsid protein VP3. As to quaternary structure, homodimer. In terms of assembly, homohexamer; forms a hexameric ring structure with 6-fold symmetry characteristic of AAA+ ATPases. Interacts (via N-terminus) with host RTN3 (via reticulon domain); this interaction is important for viral replication. Interacts with capsid protein VP3; this interaction may be important for virion morphogenesis. Interacts with protein 3CD. As to quaternary structure, homodimer. Interacts with host GBF1. Interacts (via GOLD domain) with host ACBD3 (via GOLD domain); this interaction allows the formation of a viral protein 3A/ACBD3 heterotetramer with a 2:2 stoichiometry, which will stimulate the recruitment of host PI4KB in order to synthesize PI4P at the viral RNA replication sites. In terms of assembly, interacts with RNA-directed RNA polymerase. Interacts with protein 3AB and with RNA-directed RNA polymerase. As to quaternary structure, interacts with Viral protein genome-linked and with protein 3CD. Requires Mg(2+) as cofactor. Specific enzymatic cleavages in vivo by the viral proteases yield processing intermediates and the mature proteins. In terms of processing, myristoylation is required for the formation of pentamers during virus assembly. Further assembly of 12 pentamers and a molecule of genomic RNA generates the provirion. Post-translationally, during virion maturation, immature virions are rendered infectious following cleavage of VP0 into VP4 and VP2. This maturation seems to be an autocatalytic event triggered by the presence of RNA in the capsid and it is followed by a conformational change infectious virion. Myristoylation is required during RNA encapsidation and formation of the mature virus particle. In terms of processing, VPg is uridylylated by the polymerase into VPg-pUpU. This acts as a nucleotide-peptide primer for the genomic RNA replication.

It localises to the virion. The protein resides in the host cytoplasm. It is found in the host cytoplasmic vesicle membrane. The protein localises to the host nucleus. It catalyses the reaction RNA(n) + a ribonucleoside 5'-triphosphate = RNA(n+1) + diphosphate. It carries out the reaction Selective cleavage of Tyr-|-Gly bond in the picornavirus polyprotein.. The catalysed reaction is a ribonucleoside 5'-triphosphate + H2O = a ribonucleoside 5'-diphosphate + phosphate + H(+). The enzyme catalyses Selective cleavage of Gln-|-Gly bond in the poliovirus polyprotein. In other picornavirus reactions Glu may be substituted for Gln, and Ser or Thr for Gly.. Its activity is regulated as follows. Replication or transcription is subject to high level of random mutations by the nucleotide analog ribavirin. In terms of biological role, forms an icosahedral capsid of pseudo T=3 symmetry with capsid proteins VP2 and VP3. The capsid is 300 Angstroms in diameter, composed of 60 copies of each capsid protein and enclosing the viral positive strand RNA genome. Capsid protein VP1 mainly forms the vertices of the capsid. Capsid protein VP1 interacts with host cell receptor PVR to provide virion attachment to target host epithelial cells. This attachment induces virion internalization predominantly through clathrin- and caveolin-independent endocytosis in Hela cells and through caveolin-mediated endocytosis in brain microvascular endothelial cells. Tyrosine kinases are probably involved in the entry process. Virus binding to PVR induces increased junctional permeability and rearrangement of junctional proteins. Modulation of endothelial tight junctions, as well as cytolytic infection of endothelial cells themselves, may result in loss of endothelial integrity which may help the virus to reach the CNS. After binding to its receptor, the capsid undergoes conformational changes. Capsid protein VP1 N-terminus (that contains an amphipathic alpha-helix) and capsid protein VP4 are externalized. Together, they shape a pore in the host membrane through which viral genome is translocated to host cell cytoplasm. Its function is as follows. Forms an icosahedral capsid of pseudo T=3 symmetry with capsid proteins VP1 and VP3. The capsid is 300 Angstroms in diameter, composed of 60 copies of each capsid protein and enclosing the viral positive strand RNA genome. Functionally, forms an icosahedral capsid of pseudo T=3 symmetry with capsid proteins VP2 and VP1. The capsid is 300 Angstroms in diameter, composed of 60 copies of each capsid protein and enclosing the viral positive strand RNA genome. Lies on the inner surface of the capsid shell. After binding to the host receptor, the capsid undergoes conformational changes. Capsid protein VP4 is released, Capsid protein VP1 N-terminus is externalized, and together, they shape a pore in the host membrane through which the viral genome is translocated into the host cell cytoplasm. In terms of biological role, component of immature procapsids, which is cleaved into capsid proteins VP4 and VP2 after maturation. Allows the capsid to remain inactive before the maturation step. Its function is as follows. Cysteine protease that cleaves viral polyprotein and specific host proteins. It is responsible for the autocatalytic cleavage between the P1 and P2 regions, which is the first cleavage occurring in the polyprotein. Also cleaves the host translation initiation factor EIF4G1, in order to shut down the capped cellular mRNA translation. Inhibits the host nucleus-cytoplasm protein and RNA trafficking by cleaving host members of the nuclear pores including NUP98, NUP62 and NUP153. Counteracts stress granule formation probably by antagonizing its assembly or promoting its dissassembly. Cleaves and inhibits host IFIH1/MDA5, thereby inhibiting the type-I IFN production and the establishment of the antiviral state. Cleaves and inhibits host MAVS, thereby inhibiting the type-I IFN production and the establishment of the antiviral state. Functionally, plays an essential role in the virus replication cycle by acting as a viroporin. Creates a pore in the host endoplasmic reticulum and as a consequence releases Ca2+ in the cytoplasm of infected cell. In turn, high levels of cytoplasmic calcium may trigger membrane trafficking and transport of viral ER-associated proteins to viroplasms, sites of viral genome replication. Induces and associates with structural rearrangements of intracellular membranes. Displays RNA-binding, nucleotide binding and NTPase activities. May play a role in virion morphogenesis and viral RNA encapsidation by interacting with the capsid protein VP3. In terms of biological role, localizes the viral replication complex to the surface of membranous vesicles. Together with protein 3CD binds the Cis-Active RNA Element (CRE) which is involved in RNA synthesis initiation. Acts as a cofactor to stimulate the activity of 3D polymerase, maybe through a nucleid acid chaperone activity. Its function is as follows. Localizes the viral replication complex to the surface of membranous vesicles. It inhibits host cell endoplasmic reticulum-to-Golgi apparatus transport and causes the disassembly of the Golgi complex, possibly through GBF1 interaction. This would result in depletion of MHC, trail receptors and IFN receptors at the host cell surface. Plays an essential role in viral RNA replication by recruiting ACBD3 and PI4KB at the viral replication sites, thereby allowing the formation of the rearranged membranous structures where viral replication takes place. Functionally, acts as a primer for viral RNA replication and remains covalently bound to viral genomic RNA. VPg is uridylylated prior to priming replication into VPg-pUpU. The oriI viral genomic sequence may act as a template for this. The VPg-pUpU is then used as primer on the genomic RNA poly(A) by the RNA-dependent RNA polymerase to replicate the viral genome. During genome replication, the VPg-RNA linkage is removed by the host TDP2, thereby accelerating replication. During the late stage of the replication cycle, host TDP2 is excluded from sites of viral RNA synthesis and encapsidation, allowing for the generation of progeny virions. Involved in the viral replication complex and viral polypeptide maturation. It exhibits protease activity with a specificity and catalytic efficiency that is different from protease 3C. Protein 3CD binds to the 5'UTR of the viral genome. In terms of biological role, major viral protease that mediates proteolytic processing of the polyprotein. Cleaves host EIF5B, contributing to host translation shutoff. Cleaves also host PABPC1, contributing to host translation shutoff. Cleaves host RIGI and thus contributes to the inhibition of type I interferon production. Cleaves host NLRP1, triggers host N-glycine-mediated degradation of the autoinhibitory NLRP1 N-terminal fragment. Inhibits the integrated stress response (ISR) in the infected cell by cleaving host G3BP1. Stress granule formation is thus inhibited, which allows protein synthesis and viral replication. Its function is as follows. Replicates the viral genomic RNA on the surface of intracellular membranes. May form linear arrays of subunits that propagate along a strong head-to-tail interaction called interface-I. Covalently attaches UMP to a tyrosine of VPg, which is used to prime RNA synthesis. The positive stranded RNA genome is first replicated at virus induced membranous vesicles, creating a dsRNA genomic replication form. This dsRNA is then used as template to synthesize positive stranded RNA genomes. ss(+)RNA genomes are either translated, replicated or encapsidated. The polypeptide is Genome polyprotein (Homo sapiens (Human)).